Consider the following 146-residue polypeptide: Anti-sigma F factor (146 aa).

Belongs to the anti-sigma-factor family.

It catalyses the reaction L-seryl-[protein] + ATP = O-phospho-L-seryl-[protein] + ADP + H(+). It carries out the reaction L-threonyl-[protein] + ATP = O-phospho-L-threonyl-[protein] + ADP + H(+). In terms of biological role, binds to sigma F and blocks its ability to form an RNA polymerase holoenzyme (E-sigma F). Phosphorylates SpoIIAA on a serine residue. This phosphorylation may enable SpoIIAA to act as an anti-anti-sigma factor that counteracts SpoIIAB and thus releases sigma F from inhibition. This chain is Anti-sigma F factor, found in Bacillus cytotoxicus (strain DSM 22905 / CIP 110041 / 391-98 / NVH 391-98).